We begin with the raw amino-acid sequence, 181 residues long: Crossover junction endodeoxyribonuclease RuvC (181 aa).

Catalysis depends on residues Asp-7, Glu-67, and Asp-139. Residues Asp-7, Glu-67, and Asp-139 each coordinate Mg(2+).

Belongs to the RuvC family. In terms of assembly, homodimer which binds Holliday junction (HJ) DNA. The HJ becomes 2-fold symmetrical on binding to RuvC with unstacked arms; it has a different conformation from HJ DNA in complex with RuvA. In the full resolvosome a probable DNA-RuvA(4)-RuvB(12)-RuvC(2) complex forms which resolves the HJ. It depends on Mg(2+) as a cofactor.

It is found in the cytoplasm. The catalysed reaction is Endonucleolytic cleavage at a junction such as a reciprocal single-stranded crossover between two homologous DNA duplexes (Holliday junction).. The RuvA-RuvB-RuvC complex processes Holliday junction (HJ) DNA during genetic recombination and DNA repair. Endonuclease that resolves HJ intermediates. Cleaves cruciform DNA by making single-stranded nicks across the HJ at symmetrical positions within the homologous arms, yielding a 5'-phosphate and a 3'-hydroxyl group; requires a central core of homology in the junction. The consensus cleavage sequence is 5'-(A/T)TT(C/G)-3'. Cleavage occurs on the 3'-side of the TT dinucleotide at the point of strand exchange. HJ branch migration catalyzed by RuvA-RuvB allows RuvC to scan DNA until it finds its consensus sequence, where it cleaves and resolves the cruciform DNA. The polypeptide is Crossover junction endodeoxyribonuclease RuvC (Ralstonia nicotianae (strain ATCC BAA-1114 / GMI1000) (Ralstonia solanacearum)).